A 768-amino-acid polypeptide reads, in one-letter code: Phosphoribosylformylglycinamidine synthase subunit PurL (768 aa).

Residue His53 is part of the active site. An ATP-binding site is contributed by Tyr56. Residue Glu98 coordinates Mg(2+). Residues 99–102 (SHNH) and Arg121 contribute to the substrate site. The Proton acceptor role is filled by His100. Asp122 is a Mg(2+) binding site. Gln253 serves as a coordination point for substrate. A Mg(2+)-binding site is contributed by Asp285. Residue 328-330 (ETQ) participates in substrate binding. ATP-binding residues include Asp516 and Gly561. Mg(2+) is bound at residue Asn562. Substrate is bound at residue Ser564.

This sequence belongs to the FGAMS family. Monomer. Part of the FGAM synthase complex composed of 1 PurL, 1 PurQ and 2 PurS subunits.

The protein localises to the cytoplasm. It carries out the reaction N(2)-formyl-N(1)-(5-phospho-beta-D-ribosyl)glycinamide + L-glutamine + ATP + H2O = 2-formamido-N(1)-(5-O-phospho-beta-D-ribosyl)acetamidine + L-glutamate + ADP + phosphate + H(+). It participates in purine metabolism; IMP biosynthesis via de novo pathway; 5-amino-1-(5-phospho-D-ribosyl)imidazole from N(2)-formyl-N(1)-(5-phospho-D-ribosyl)glycinamide: step 1/2. Its function is as follows. Part of the phosphoribosylformylglycinamidine synthase complex involved in the purines biosynthetic pathway. Catalyzes the ATP-dependent conversion of formylglycinamide ribonucleotide (FGAR) and glutamine to yield formylglycinamidine ribonucleotide (FGAM) and glutamate. The FGAM synthase complex is composed of three subunits. PurQ produces an ammonia molecule by converting glutamine to glutamate. PurL transfers the ammonia molecule to FGAR to form FGAM in an ATP-dependent manner. PurS interacts with PurQ and PurL and is thought to assist in the transfer of the ammonia molecule from PurQ to PurL. In Methanothrix thermoacetophila (strain DSM 6194 / JCM 14653 / NBRC 101360 / PT) (Methanosaeta thermophila), this protein is Phosphoribosylformylglycinamidine synthase subunit PurL.